We begin with the raw amino-acid sequence, 95 residues long: Aspartyl/glutamyl-tRNA(Asn/Gln) amidotransferase subunit C (95 aa).

It belongs to the GatC family. In terms of assembly, heterotrimer of A, B and C subunits.

The enzyme catalyses L-glutamyl-tRNA(Gln) + L-glutamine + ATP + H2O = L-glutaminyl-tRNA(Gln) + L-glutamate + ADP + phosphate + H(+). It catalyses the reaction L-aspartyl-tRNA(Asn) + L-glutamine + ATP + H2O = L-asparaginyl-tRNA(Asn) + L-glutamate + ADP + phosphate + 2 H(+). Its function is as follows. Allows the formation of correctly charged Asn-tRNA(Asn) or Gln-tRNA(Gln) through the transamidation of misacylated Asp-tRNA(Asn) or Glu-tRNA(Gln) in organisms which lack either or both of asparaginyl-tRNA or glutaminyl-tRNA synthetases. The reaction takes place in the presence of glutamine and ATP through an activated phospho-Asp-tRNA(Asn) or phospho-Glu-tRNA(Gln). The sequence is that of Aspartyl/glutamyl-tRNA(Asn/Gln) amidotransferase subunit C from Rhodopseudomonas palustris (strain TIE-1).